Here is a 311-residue protein sequence, read N- to C-terminus: Lipoyl synthase (311 aa).

7 residues coordinate [4Fe-4S] cluster: C58, C63, C69, C84, C88, C91, and S298. The Radical SAM core domain maps to F70–R287.

The protein belongs to the radical SAM superfamily. Lipoyl synthase family. Requires [4Fe-4S] cluster as cofactor.

Its subcellular location is the cytoplasm. It catalyses the reaction [[Fe-S] cluster scaffold protein carrying a second [4Fe-4S](2+) cluster] + N(6)-octanoyl-L-lysyl-[protein] + 2 oxidized [2Fe-2S]-[ferredoxin] + 2 S-adenosyl-L-methionine + 4 H(+) = [[Fe-S] cluster scaffold protein] + N(6)-[(R)-dihydrolipoyl]-L-lysyl-[protein] + 4 Fe(3+) + 2 hydrogen sulfide + 2 5'-deoxyadenosine + 2 L-methionine + 2 reduced [2Fe-2S]-[ferredoxin]. The protein operates within protein modification; protein lipoylation via endogenous pathway; protein N(6)-(lipoyl)lysine from octanoyl-[acyl-carrier-protein]: step 2/2. Catalyzes the radical-mediated insertion of two sulfur atoms into the C-6 and C-8 positions of the octanoyl moiety bound to the lipoyl domains of lipoate-dependent enzymes, thereby converting the octanoylated domains into lipoylated derivatives. This chain is Lipoyl synthase, found in Thiobacillus denitrificans (strain ATCC 25259 / T1).